The sequence spans 571 residues: UvrABC system protein C (571 aa).

The region spanning 15–93 (TSPGVYLWKD…VDRFNPEFNI (79 aa)) is the GIY-YIG domain. Residues 184–219 (NNYLNELTNKMHTAANNMQFELALFLRDGLTYLKKL) enclose the UVR domain.

This sequence belongs to the UvrC family. Interacts with UvrB in an incision complex.

The protein localises to the cytoplasm. Its function is as follows. The UvrABC repair system catalyzes the recognition and processing of DNA lesions. UvrC both incises the 5' and 3' sides of the lesion. The N-terminal half is responsible for the 3' incision and the C-terminal half is responsible for the 5' incision. The sequence is that of UvrABC system protein C from Mycoplasmopsis agalactiae (strain NCTC 10123 / CIP 59.7 / PG2) (Mycoplasma agalactiae).